The chain runs to 463 residues: Fumarate hydratase class II (463 aa).

Residues 98 to 100 (SGT), 129 to 132 (HPND), 139 to 141 (SSN), and threonine 187 contribute to the substrate site. Histidine 188 functions as the Proton donor/acceptor in the catalytic mechanism. The active site involves serine 318. Substrate is bound by residues serine 319 and 324 to 326 (KVN).

It belongs to the class-II fumarase/aspartase family. Fumarase subfamily. Homotetramer.

It is found in the cytoplasm. The enzyme catalyses (S)-malate = fumarate + H2O. The protein operates within carbohydrate metabolism; tricarboxylic acid cycle; (S)-malate from fumarate: step 1/1. Involved in the TCA cycle. Catalyzes the stereospecific interconversion of fumarate to L-malate. In Rhizobium meliloti (strain 1021) (Ensifer meliloti), this protein is Fumarate hydratase class II.